A 482-amino-acid chain; its full sequence is Proton extrusion protein PxcA (482 aa).

Transmembrane regions (helical) follow at residues 265–285, 359–379, 406–426, and 442–462; these read FVLG…NLVI, PLKN…YFVL, IIIL…WEVI, and FINM…KYWI.

Belongs to the CemA family.

The protein resides in the cell inner membrane. Its function is as follows. Required for H(+) efflux immediately after light irradiation to form a rapid H(+) concentration gradient across the thylakoid membranes. Together with PxcL, contributes to transient H(+) uptake following dark to light transition. The protein is Proton extrusion protein PxcA of Acaryochloris marina (strain MBIC 11017).